Reading from the N-terminus, the 200-residue chain is NADH-ubiquinone oxidoreductase 21.3 kDa subunit (200 aa).

3 consecutive transmembrane segments (helical) span residues 16–36, 48–68, and 105–125; these read IKSGVSGALFSGGAGLLMASL, MHVFTHGGGTIISFTLAGGIY, and FPVILGFGAMAGSVVGAFAFS.

Complex I is composed of about 40 different subunits.

It localises to the mitochondrion inner membrane. It carries out the reaction a ubiquinone + NADH + 5 H(+)(in) = a ubiquinol + NAD(+) + 4 H(+)(out). Its function is as follows. Transfer of electrons from NADH to the respiratory chain. The immediate electron acceptor for the enzyme is believed to be ubiquinone. The chain is NADH-ubiquinone oxidoreductase 21.3 kDa subunit from Neurospora crassa (strain ATCC 24698 / 74-OR23-1A / CBS 708.71 / DSM 1257 / FGSC 987).